The following is a 225-amino-acid chain: 7-cyano-7-deazaguanine synthase (225 aa).

9-19 is an ATP binding site; sequence LSGGLDSATCL. Zn(2+) is bound by residues Cys189, Cys199, Cys202, and Cys205.

The protein belongs to the QueC family. Zn(2+) serves as cofactor.

It catalyses the reaction 7-carboxy-7-deazaguanine + NH4(+) + ATP = 7-cyano-7-deazaguanine + ADP + phosphate + H2O + H(+). It participates in purine metabolism; 7-cyano-7-deazaguanine biosynthesis. Catalyzes the ATP-dependent conversion of 7-carboxy-7-deazaguanine (CDG) to 7-cyano-7-deazaguanine (preQ(0)). This is 7-cyano-7-deazaguanine synthase from Dechloromonas aromatica (strain RCB).